A 356-amino-acid chain; its full sequence is Photosystem II protein D1 4 (356 aa).

A run of 3 helical transmembrane segments spans residues 32 to 49 (YIGW…AATT), 121 to 136 (HFLI…FWEL), and 145 to 159 (WIAV…AATS). Chlorophyll a is bound at residue His121. Residues Asp173 and Asp192 each coordinate [CaMn4O5] cluster. A helical membrane pass occupies residues 200–221 (FHMLGVAGVFGGALLSSLHGSL). His201 contributes to the chlorophyll a binding site. An a quinone-binding site is contributed by His218. Fe cation contacts are provided by His218 and His276. The helical transmembrane segment at 278 to 292 (LLAALPTIGIWFAAM) threads the bilayer. His336 provides a ligand contact to [CaMn4O5] cluster.

This sequence belongs to the reaction center PufL/M/PsbA/D family. PSII is composed of 1 copy each of membrane proteins PsbA, PsbB, PsbC, PsbD, PsbE, PsbF, PsbH, PsbI, PsbJ, PsbK, PsbL, PsbM, PsbT, PsbX, PsbY, PsbZ, Psb30/Ycf12, peripheral proteins PsbO, CyanoQ (PsbQ), PsbU, PsbV and a large number of cofactors. It forms dimeric complexes. The cofactor is The D1/D2 heterodimer binds P680, chlorophylls that are the primary electron donor of PSII, and subsequent electron acceptors. It shares a non-heme iron and each subunit binds pheophytin, quinone, additional chlorophylls, carotenoids and lipids. D1 provides most of the ligands for the Mn4-Ca-O5 cluster of the oxygen-evolving complex (OEC). There is also a Cl(-1) ion associated with D1 and D2, which is required for oxygen evolution. The PSII complex binds additional chlorophylls, carotenoids and specific lipids.. In terms of processing, tyr-164 forms a radical intermediate that is referred to as redox-active TyrZ, YZ or Y-Z.

It is found in the cellular thylakoid membrane. It catalyses the reaction 2 a plastoquinone + 4 hnu + 2 H2O = 2 a plastoquinol + O2. Its function is as follows. Photosystem II (PSII) is a light-driven water:plastoquinone oxidoreductase that uses light energy to abstract electrons from H(2)O, generating O(2) and a proton gradient subsequently used for ATP formation. It consists of a core antenna complex that captures photons, and an electron transfer chain that converts photonic excitation into a charge separation. The D1/D2 (PsbA/PsbD) reaction center heterodimer binds P680, the primary electron donor of PSII as well as several subsequent electron acceptors. The sequence is that of Photosystem II protein D1 4 from Trichormus variabilis (strain ATCC 29413 / PCC 7937) (Anabaena variabilis).